We begin with the raw amino-acid sequence, 295 residues long: Acetylglutamate kinase (295 aa).

Substrate contacts are provided by residues 66 to 67 (GG), arginine 88, and asparagine 193.

Belongs to the acetylglutamate kinase family. ArgB subfamily.

The protein localises to the cytoplasm. The enzyme catalyses N-acetyl-L-glutamate + ATP = N-acetyl-L-glutamyl 5-phosphate + ADP. The protein operates within amino-acid biosynthesis; L-arginine biosynthesis; N(2)-acetyl-L-ornithine from L-glutamate: step 2/4. In terms of biological role, catalyzes the ATP-dependent phosphorylation of N-acetyl-L-glutamate. The sequence is that of Acetylglutamate kinase from Sinorhizobium fredii (strain NBRC 101917 / NGR234).